Reading from the N-terminus, the 352-residue chain is C-C chemokine receptor type 5 (352 aa).

At 1-30 (MDYQVSSPTYDIDYYTSEPCQKINVKQIAA) the chain is on the extracellular side. Position 3 is a sulfotyrosine (tyrosine 3). O-linked (GalNAc...) serine glycosylation is found at serine 6 and serine 7. 3 positions are modified to sulfotyrosine: tyrosine 10, tyrosine 14, and tyrosine 15. 2 disulfide bridges follow: cysteine 20-cysteine 269 and cysteine 101-cysteine 178. The helical transmembrane segment at 31–58 (RLLPPLYSLVFIFGFVGNILVVLILINC) threads the bilayer. Over 59–68 (KRLKSMTDIY) the chain is Cytoplasmic. A helical transmembrane segment spans residues 69–89 (LLNLAISDLLFLLTVPFWAHY). Residues 90-102 (AAAQWDFGNTMCQ) are Extracellular-facing. Residues 103-124 (LLTGLYFIGFFSGIFFIILLTI) traverse the membrane as a helical segment. Residues 125–141 (DRYLAIVHAVFALKART) are Cytoplasmic-facing. A helical transmembrane segment spans residues 142-166 (VTFGVVTSVITWVVAVFASLPGIIF). Residues 167–198 (TRSQREGLHYTCSSHFPYSQYQFWKNFQTLKI) are Extracellular-facing. Residues 199–218 (VILGLVLPLLVMVICYSGIL) traverse the membrane as a helical segment. The Cytoplasmic portion of the chain corresponds to 219–235 (KTLLRCRNEKKRHRAVR). A helical membrane pass occupies residues 236 to 260 (LIFTIMIVYFLFWAPYNIVLLLNTF). The Extracellular portion of the chain corresponds to 261–277 (QEFFGLNNCSSSNRLDQ). A helical membrane pass occupies residues 278 to 301 (AMQVTETLGMTHCCINPIIYAFVG). The Cytoplasmic portion of the chain corresponds to 302-352 (EKFRNYLLVFFQKHIAKRFCKCCSIFQQEASERASSVYTRSTGEQEISVGL). 3 S-palmitoyl cysteine lipidation sites follow: cysteine 321, cysteine 323, and cysteine 324. 4 positions are modified to phosphoserine; by BARK1: serine 336, serine 337, serine 342, and serine 349.

The protein belongs to the G-protein coupled receptor 1 family. As to quaternary structure, interacts with PRAF2. Efficient ligand binding to CCL3/MIP-1alpha and CCL4/MIP-1beta requires sulfation, O-glycosylation and sialic acid modifications. Glycosylation on Ser-6 is required for efficient binding of CCL4. Interacts with GRK2. Interacts with ARRB1 and ARRB2. Interacts with CNIH4. Interacts with S100A4; this interaction stimulates T-lymphocyte chemotaxis. In terms of processing, sulfated on at least 2 of the N-terminal tyrosines. Sulfation is required for efficient binding of the chemokines, CCL3 and CCL4. Post-translationally, palmitoylation in the C-terminal is important for cell surface expression. Phosphorylation on serine residues in the C-terminal is stimulated by binding CC chemokines especially by APO-RANTES. In terms of processing, O-glycosylated, but not N-glycosylated. Ser-6 appears to be the major site even if Ser-7 may be also O-glycosylated. Also sialylated glycans present which contribute to chemokine binding. Thr-16 and Ser-17 may also be glycosylated and, if so, with small moieties such as a T-antigen.

The protein localises to the cell membrane. Functionally, receptor for a number of inflammatory CC-chemokines including CCL3/MIP-1-alpha, CCL4/MIP-1-beta and RANTES and subsequently transduces a signal by increasing the intracellular calcium ion level. May play a role in the control of granulocytic lineage proliferation or differentiation. Participates in T-lymphocyte migration to the infection site by acting as a chemotactic receptor. This is C-C chemokine receptor type 5 (CCR5) from Cercocebus galeritus (Tana river mangabey).